The primary structure comprises 415 residues: MKMSAASDHLLAAQETQMQCIEKDSRLLQDHACYWGAVRREKLLLYAARTKGLKTIGCVPVPPCSVTAEQAKQAICMQLIVEELLHSPWAKEPWSLTDLSWERYQAAPKGCLKKGARVVEVEYDGNSSNKTWYTAWSTVYVRGTEEEGWETAVCAADGQGIYYCAGMSSKVYFETFETDARRWSRTGHWTVRDNDVIYHSTFGAPPHSRNDRDCIEGFWSDAGERRGSRGSDTTDRALPYPAARQSPICRPVRTGENRSRAVHRQAPYSAPSSPGSSVGPDSPSESSRQVPLVLLPGPSDPAPPSPDSTDVIAEGDKEPERFSILSKPGGQPCLILSGNGNQAKCYRFRCKRYFREHYQHITTTWWTVGERGSERHGDACVLVTFKDSSQRGVFLKRVPLPPGMRAQALTMIADF.

The interval 1–205 (MKMSAASDHL…VIYHSTFGAP (205 aa)) is transactivation domain. The tract at residues 221–313 (DAGERRGSRG…PSPDSTDVIA (93 aa)) is disordered. A compositionally biased stretch (basic and acidic residues) spans 222 to 235 (AGERRGSRGSDTTD). Over residues 267-287 (PYSAPSSPGSSVGPDSPSESS) the composition is skewed to low complexity. A DNA-binding domain region spans residues 330–415 (GQPCLILSGN…AQALTMIADF (86 aa)).

Belongs to the papillomaviridae E2 protein family. Binds DNA as homodimer. Interacts with protein E1; this interaction greatly increases E1 DNA-binding activity. Interacts with protein L1; this interaction enhances E2-dependent replication and transcription activation. Interacts with protein L2; this interaction inhibits E2 transcriptional activity but not DNA replication function E2. Interacts with protein E7; this interaction inhibits E7 oncogenic activity. Interacts with host TAF1; this interaction modulates E2-dependent transcriptional regulation. Interacts with host BRD4; this interaction mediates E2 transcriptional activation function. Additionally, the interaction with host BRD4 on mitotic chromosomes mediates tethering of the viral genome. Interacts with host TOPBP1; this interaction is required for optimal viral DNA replication. In terms of processing, phosphorylated.

The protein resides in the host nucleus. Its function is as follows. Plays a role in the initiation of viral DNA replication. A dimer of E2 interacts with a dimer of E1 in order to improve specificity of E1 DNA binding activity. Once the complex recognizes and binds DNA at specific sites, the E2 dimer is removed from DNA. E2 also regulates viral transcription through binding to the E2RE response element (5'-ACCNNNNNNGGT-3') present in multiple copies in the regulatory regions of the viral genome. Activates or represses transcription depending on E2RE's position with regards to proximal promoter elements including the TATA-box. Repression occurs by sterically hindering the assembly of the transcription initiation complex. In European elk papillomavirus (EEPV), this protein is Regulatory protein E2.